A 223-amino-acid chain; its full sequence is MHMKSFKIAIDGPAGSGKSTISKKLSQKLGWNHVDTGAMFRALTLYLLENEVSWHHEKSLNQALDKINLSYSCNKIFLNQEDVSLKIKSLDVEKHVSSVALIPAVRTKLLKLQKEICGNTPNLIMDGRDIGTVVMPDANLKIFLTANITKRALRKQQEDAQKGKITDIAQIMKQLKERDHKDYHRQLAPLSKALDAILLDTTELSIDEVIAKIIALIDKKRRT.

12 to 20 contributes to the ATP binding site; it reads GPAGSGKST.

Belongs to the cytidylate kinase family. Type 1 subfamily.

It localises to the cytoplasm. The enzyme catalyses CMP + ATP = CDP + ADP. The catalysed reaction is dCMP + ATP = dCDP + ADP. In Onion yellows phytoplasma (strain OY-M), this protein is Cytidylate kinase.